A 453-amino-acid polypeptide reads, in one-letter code: Ethanolamine ammonia-lyase large subunit (453 aa).

Residues 160-162 (RLQ) and Asn-193 each bind substrate. The adenosylcob(III)alamin site is built by Pro-194 and Gln-246. Glu-287 is a substrate binding site. Ser-295 is a binding site for adenosylcob(III)alamin. Asp-362 contributes to the substrate binding site. Met-401 lines the adenosylcob(III)alamin pocket.

The protein belongs to the EutB family. In terms of assembly, the basic unit is a heterodimer which dimerizes to form tetramers. The heterotetramers trimerize; 6 large subunits form a core ring with 6 small subunits projecting outwards. Adenosylcob(III)alamin is required as a cofactor.

The protein localises to the bacterial microcompartment. It catalyses the reaction ethanolamine = acetaldehyde + NH4(+). Its pathway is amine and polyamine degradation; ethanolamine degradation. Its function is as follows. Catalyzes the deamination of various vicinal amino-alcohols to oxo compounds. It is spontaneously inactivated by its substrate and reactivated by EutA. May play a role in BMC assembly or maintenance. Functionally, expression of the eut operon allows this bacteria to use ethanolamine (EA) as a carbon, nitrogen and energy source. It relies on cobalamin (vitamin B12) both as a cofactor for the ethanolamine ammonia-lyase activity and to induce the operon. EA enhances bacterial survival in macrophages in a concentration-dependent manner, suggesting it is an important nutrient during infection. This is Ethanolamine ammonia-lyase large subunit from Salmonella typhimurium (strain LT2 / SGSC1412 / ATCC 700720).